Here is a 253-residue protein sequence, read N- to C-terminus: MLTKRIIPCLDVKEGRVVKGIQFVSIRDAGDPVELAKFYDEQGADELVFLDISASHEGRETMIEVVQQTAATLAIPFTVGGGIRTLDDMKRILRAGADKVSVNTSALERPSLIQEGSDFFGAQCIVVAIDARYSEEDGTWMVYTHGGRNKTTWSAIDWAKEAVRLGAGEILLTSMNQDGEKSGFDLGLTKAVREAVSVPVIASGGAGYAEHFYEVLAEEVDADAALAASIFHYKETSVAQVKEYLRAKGVAVR.

Catalysis depends on residues Asp11 and Asp130.

Belongs to the HisA/HisF family. Heterodimer of HisH and HisF.

The protein resides in the cytoplasm. It carries out the reaction 5-[(5-phospho-1-deoxy-D-ribulos-1-ylimino)methylamino]-1-(5-phospho-beta-D-ribosyl)imidazole-4-carboxamide + L-glutamine = D-erythro-1-(imidazol-4-yl)glycerol 3-phosphate + 5-amino-1-(5-phospho-beta-D-ribosyl)imidazole-4-carboxamide + L-glutamate + H(+). It functions in the pathway amino-acid biosynthesis; L-histidine biosynthesis; L-histidine from 5-phospho-alpha-D-ribose 1-diphosphate: step 5/9. Functionally, IGPS catalyzes the conversion of PRFAR and glutamine to IGP, AICAR and glutamate. The HisF subunit catalyzes the cyclization activity that produces IGP and AICAR from PRFAR using the ammonia provided by the HisH subunit. This Lysinibacillus sphaericus (strain C3-41) protein is Imidazole glycerol phosphate synthase subunit HisF.